Consider the following 741-residue polypeptide: Ethylene receptor 2 (741 aa).

Transmembrane regions (helical) follow at residues 23–43, 53–73, and 92–112; these read ISDF…IYFV, WVLV…LINL, and IMTA…IPDL. Cu cation-binding residues include Cys-65 and His-69. In terms of domain architecture, GAF spans 158-307; the sequence is DRHTILKTTL…VVADQVAVAL (150 aa). In terms of domain architecture, Histidine kinase spans 350-589; sequence VMNHEMRTPM…TFVVKLGIPE (240 aa). A Phosphohistidine; by autocatalysis modification is found at His-353. The region spanning 615-732 is the Response regulatory domain; it reads KVLLLDDNGV…KMRNVLSNLL (118 aa). At Asp-663 the chain carries 4-aspartylphosphate.

Belongs to the ethylene receptor family. As to quaternary structure, homodimer; disulfide-linked. Cu cation serves as cofactor. Activation probably requires a transfer of a phosphate group between a His in the transmitter domain and an Asp of the receiver domain.

It localises to the endoplasmic reticulum membrane. The catalysed reaction is ATP + protein L-histidine = ADP + protein N-phospho-L-histidine.. Its function is as follows. May act early in the ethylene signal transduction pathway, possibly as an ethylene receptor, or as a regulator of the pathway. This Pelargonium hortorum (Common geranium) protein is Ethylene receptor 2 (ETR2).